A 202-amino-acid chain; its full sequence is LexA repressor (202 aa).

A DNA-binding region (H-T-H motif) is located at residues 28–48; that stretch reads RAEIAQRLGFRSPNAAEEHLK. Active-site for autocatalytic cleavage activity residues include serine 119 and lysine 156.

It belongs to the peptidase S24 family. In terms of assembly, homodimer.

The catalysed reaction is Hydrolysis of Ala-|-Gly bond in repressor LexA.. Represses a number of genes involved in the response to DNA damage (SOS response), including recA and lexA. Binds to the 16 bp palindromic sequence 5'-CTGTATATATATACAG-3'. In the presence of single-stranded DNA, RecA interacts with LexA causing an autocatalytic cleavage which disrupts the DNA-binding part of LexA, leading to derepression of the SOS regulon and eventually DNA repair. The polypeptide is LexA repressor (Klebsiella pneumoniae (strain 342)).